A 635-amino-acid chain; its full sequence is Phosphomethylpyrimidine synthase (635 aa).

Over residues 1–14 (MNATVSSAVQSSLP) the composition is skewed to polar residues. The disordered stretch occupies residues 1–41 (MNATVSSAVQSSLPFSGKTAQVDEGTVKPLPRSQKTYLSGS). Residues N240, M269, Y298, H334, 354-356 (SRG), 395-398 (DGLR), and E434 each bind substrate. H438 is a binding site for Zn(2+). Position 461 (Y461) interacts with substrate. H502 lines the Zn(2+) pocket. 3 residues coordinate [4Fe-4S] cluster: C582, C585, and C590.

The protein belongs to the ThiC family. In terms of assembly, homodimer. [4Fe-4S] cluster is required as a cofactor.

The catalysed reaction is 5-amino-1-(5-phospho-beta-D-ribosyl)imidazole + S-adenosyl-L-methionine = 4-amino-2-methyl-5-(phosphooxymethyl)pyrimidine + CO + 5'-deoxyadenosine + formate + L-methionine + 3 H(+). It participates in cofactor biosynthesis; thiamine diphosphate biosynthesis. Its function is as follows. Catalyzes the synthesis of the hydroxymethylpyrimidine phosphate (HMP-P) moiety of thiamine from aminoimidazole ribotide (AIR) in a radical S-adenosyl-L-methionine (SAM)-dependent reaction. The sequence is that of Phosphomethylpyrimidine synthase from Nitrosospira multiformis (strain ATCC 25196 / NCIMB 11849 / C 71).